Consider the following 226-residue polypeptide: Protein YAE1 homolog (226 aa).

The segment at glycine 45–alanine 85 is deca-GX3 motif; required for interaction with LTO1.

As to quaternary structure, forms a complex with LTO1.

The protein localises to the cytoplasm. The protein resides in the nucleus. Functionally, the complex LTO1:YAE1 functions as a target specific adapter that probably recruits apo-ABCE1 to the cytosolic iron-sulfur protein assembly (CIA) complex machinery. May be required for biogenesis of the large ribosomal subunit and initiation of translation. This Homo sapiens (Human) protein is Protein YAE1 homolog.